The chain runs to 346 residues: Annexin A1 (346 aa).

S5 bears the Phosphoserine; by TRPM7 mark. An Isoglutamyl lysine isopeptide (Gln-Lys) (interchain with K-?) cross-link involves residue Q19. At Y21 the chain carries Phosphotyrosine; by EGFR. A phosphoserine mark is found at S34 and S37. Annexin repeat units lie at residues 42-113, 114-185, 197-269, and 273-344; these read FNPS…ALLK, TPAR…SLAK, DLAD…AIVK, and SKPM…ALCG. K58 carries the N6-acetyllysine modification. The Ca(2+) site is built by G59, V60, E62, K97, L100, E105, M127, G129, G131, T132, and E134. A Phosphothreonine modification is found at T136. 3 residues coordinate Ca(2+): D171, G210, and R213. Residue K214 forms a Glycyl lysine isopeptide (Lys-Gly) (interchain with G-Cter in SUMO1); alternate linkage. K214 participates in a covalent cross-link: Glycyl lysine isopeptide (Lys-Gly) (interchain with G-Cter in SUMO2); alternate. G215, D253, E255, and M256 together coordinate Ca(2+). K257 participates in a covalent cross-link: Glycyl lysine isopeptide (Lys-Gly) (interchain with G-Cter in SUMO1). E261, M286, G288, and G290 together coordinate Ca(2+). Position 312 is an N6-acetyllysine (K312). An intrachain disulfide couples C324 to C343. 3 residues coordinate Ca(2+): L328, E330, and T331. K332 participates in a covalent cross-link: Glycyl lysine isopeptide (Lys-Gly) (interchain with G-Cter in SUMO1). E336 lines the Ca(2+) pocket.

This sequence belongs to the annexin family. In terms of assembly, homodimer; non-covalently linked. Homodimer; linked by transglutamylation. Homodimers linked by transglutamylation are observed in placenta, but not in other tissues. Interacts with S100A11. Heterotetramer, formed by two molecules each of S100A11 and ANXA1. Interacts with DYSF. Interacts with EGFR. Phosphorylated by protein kinase C, EGFR and TRPM7. Phosphorylated in response to EGF treatment. In terms of processing, sumoylated. Post-translationally, proteolytically cleaved by cathepsin CTSG to release the active N-terminal peptide Ac2-26.

The protein localises to the nucleus. The protein resides in the cytoplasm. It is found in the cell projection. It localises to the cilium. Its subcellular location is the basolateral cell membrane. The protein localises to the lateral cell membrane. The protein resides in the cell membrane. It is found in the apical cell membrane. It localises to the membrane. Its subcellular location is the early endosome. The protein localises to the cytoplasmic vesicle membrane. The protein resides in the endosome membrane. It is found in the secreted. It localises to the extracellular space. Its subcellular location is the extracellular exosome. The protein localises to the cytoplasmic vesicle. The protein resides in the secretory vesicle lumen. It is found in the phagocytic cup. Plays important roles in the innate immune response as effector of glucocorticoid-mediated responses and regulator of the inflammatory process. Has anti-inflammatory activity. Plays a role in glucocorticoid-mediated down-regulation of the early phase of the inflammatory response. Contributes to the adaptive immune response by enhancing signaling cascades that are triggered by T-cell activation, regulates differentiation and proliferation of activated T-cells. Promotes the differentiation of T-cells into Th1 cells and negatively regulates differentiation into Th2 cells. Has no effect on unstimulated T-cells. Negatively regulates hormone exocytosis via activation of the formyl peptide receptors and reorganization of the actin cytoskeleton. Has high affinity for Ca(2+) and can bind up to eight Ca(2+) ions. Displays Ca(2+)-dependent binding to phospholipid membranes. Plays a role in the formation of phagocytic cups and phagosomes. Plays a role in phagocytosis by mediating the Ca(2+)-dependent interaction between phagosomes and the actin cytoskeleton. Functionally, functions at least in part by activating the formyl peptide receptors and downstream signaling cascades. Promotes chemotaxis of granulocytes and monocytes via activation of the formyl peptide receptors. Promotes rearrangement of the actin cytoskeleton, cell polarization and cell migration. Promotes resolution of inflammation and wound healing. Acts via neutrophil N-formyl peptide receptors to enhance the release of CXCL2. The protein is Annexin A1 (ANXA1) of Equus caballus (Horse).